The following is a 317-amino-acid chain: 2,3,4,5-tetrahydropyridine-2,6-dicarboxylate N-succinyltransferase (317 aa).

2 residues coordinate Mg(2+): Asp-166 and Glu-183. Glu-199 acts as the Acyl-anhydride intermediate in catalysis. Succinyl-CoA-binding positions include Arg-201, Gly-216, Ser-219, Ala-242, 257–258 (EA), Gly-265, Lys-277, and 290–293 (RRNS).

This sequence belongs to the type 2 tetrahydrodipicolinate N-succinyltransferase family. Homotrimer.

The protein resides in the cytoplasm. The enzyme catalyses (S)-2,3,4,5-tetrahydrodipicolinate + succinyl-CoA + H2O = (S)-2-succinylamino-6-oxoheptanedioate + CoA. It functions in the pathway amino-acid biosynthesis; L-lysine biosynthesis via DAP pathway; LL-2,6-diaminopimelate from (S)-tetrahydrodipicolinate (succinylase route): step 1/3. Catalyzes the conversion of the cyclic tetrahydrodipicolinate (THDP) into the acyclic N-succinyl-L-2-amino-6-oxopimelate using succinyl-CoA. The protein is 2,3,4,5-tetrahydropyridine-2,6-dicarboxylate N-succinyltransferase (dapD) of Mycobacterium tuberculosis (strain CDC 1551 / Oshkosh).